Consider the following 664-residue polypeptide: Intraflagellar transport protein 70A2 (664 aa).

TPR repeat units follow at residues 11–44 (DGEF…SSRS), 45–78 (RAGL…HPEL), 153–186 (PDGL…SGYQ), 188–220 (DVSY…GIRQ), 395–423 (QVQE…EKYI), 424–456 (PVLM…CNDH), and 458–491 (VWKL…NYDN). Residues 507–534 (YIMTSQNEEAEELMRKIEKEEEQLSYGD) are a coiled coil. A TPR 8 repeat occupies 543–576 (CIVNLVIGTLYCAKGNYDFGISRVIKSLEPYHKK).

Belongs to the TTC30/dfy-1/fleer family. As to quaternary structure, interacts wit the IFT B complex component IFT52.

The protein localises to the cell projection. The protein resides in the cilium. Its function is as follows. Required for polyglutamylation of axonemal tubulin. Plays a role in anterograde intraflagellar transport (IFT), the process by which cilia precursors are transported from the base of the cilium to the site of their incorporation at the tip. In Mus musculus (Mouse), this protein is Intraflagellar transport protein 70A2 (Ift70a2).